A 123-amino-acid chain; its full sequence is Phosphoribosyl-AMP cyclohydrolase (123 aa).

A Mg(2+)-binding site is contributed by Asp-81. Cys-82 is a Zn(2+) binding site. Positions 83 and 85 each coordinate Mg(2+). Zn(2+) is bound by residues Cys-98 and Cys-105.

It belongs to the PRA-CH family. Homodimer. Mg(2+) serves as cofactor. It depends on Zn(2+) as a cofactor.

It localises to the cytoplasm. It carries out the reaction 1-(5-phospho-beta-D-ribosyl)-5'-AMP + H2O = 1-(5-phospho-beta-D-ribosyl)-5-[(5-phospho-beta-D-ribosylamino)methylideneamino]imidazole-4-carboxamide. It participates in amino-acid biosynthesis; L-histidine biosynthesis; L-histidine from 5-phospho-alpha-D-ribose 1-diphosphate: step 3/9. Catalyzes the hydrolysis of the adenine ring of phosphoribosyl-AMP. In Nocardioides sp. (strain ATCC BAA-499 / JS614), this protein is Phosphoribosyl-AMP cyclohydrolase.